Consider the following 847-residue polypeptide: Receptor-like protein 12 (847 aa).

The first 27 residues, 1 to 27 (MMIRSHRHWVFSSRIIIFLSLLVHSLA), serve as a signal peptide directing secretion. The Extracellular segment spans residues 28-798 (SSSPHFCRDD…LSEAEENMFN (771 aa)). Residues Asn52, Asn66, Asn103, and Asn132 are each glycosylated (N-linked (GlcNAc...) asparagine). LRR repeat units follow at residues 109–133 (LQYL…LGNL), 135–157 (HLTL…IGNL), 158–181 (NQLR…LGNL), 183–205 (RLVN…IGDL), 206–229 (KQLR…LGNL), 231–253 (NLVH…IGNL), 254–277 (IELR…FANL), 279–301 (KLSI…MSIF), 302–325 (HNLE…LLLI), 326–350 (PSLE…TSSS), 351–374 (TKLQ…ISRL), 375–398 (LNLE…ISKL), 400–422 (NLLH…LWRL), 424–442 (TMVL…SQEE), 443–466 (ALIE…ICKL), 467–491 (SSLG…RNFS), 492–514 (GSIK…IFSK), 516–539 (TELV…LINC), 541–562 (ALEL…WLES), 563–587 (LPSL…HASI), 589–613 (FQSL…YFSN), 657–681 (RRDF…LGYL), 682–704 (KELR…FLAN), 705–729 (LTKL…LAAL), and 731–754 (FLSY…QFQR). A glycan (N-linked (GlcNAc...) asparagine) is linked at Asn180. N-linked (GlcNAc...) asparagine glycans are attached at residues Asn210 and Asn228. 3 N-linked (GlcNAc...) asparagine glycosylation sites follow: Asn263, Asn276, and Asn289. Asn346 carries an N-linked (GlcNAc...) asparagine glycan. Asn386 is a glycosylation site (N-linked (GlcNAc...) asparagine). Asn437 carries an N-linked (GlcNAc...) asparagine glycan. N-linked (GlcNAc...) asparagine glycosylation is found at Asn489 and Asn503. N-linked (GlcNAc...) asparagine glycosylation occurs at Asn601. Asn688 and Asn704 each carry an N-linked (GlcNAc...) asparagine glycan. Asn736 carries N-linked (GlcNAc...) asparagine glycosylation. A helical membrane pass occupies residues 799-819 (WVAAAIAYGPGVLCGLVIGHF). The Cytoplasmic portion of the chain corresponds to 820-847 (YTSHNHEWFTEKFGRKQHKALTSVKCSL).

This sequence belongs to the RLP family.

It is found in the cell membrane. Its function is as follows. Involved in the perception of CLV3 and CLV3-like peptides, that act as extracellular signals regulating meristems maintenance. This is Receptor-like protein 12 from Arabidopsis thaliana (Mouse-ear cress).